The primary structure comprises 131 residues: Auxin-responsive protein SAUR77 (131 aa).

The protein belongs to the ARG7 family.

Functionally, may be involved in the regulation of ethylene receptor signaling. Promotes cell expansion and plant growth. This is Auxin-responsive protein SAUR77 from Arabidopsis thaliana (Mouse-ear cress).